We begin with the raw amino-acid sequence, 162 residues long: 2-C-methyl-D-erythritol 2,4-cyclodiphosphate synthase (162 aa).

Residues aspartate 9 and histidine 11 each coordinate a divalent metal cation. Residues 9–11 and 35–36 each bind 4-CDP-2-C-methyl-D-erythritol 2-phosphate; these read DVH and HS. Histidine 43 is a binding site for a divalent metal cation. 4-CDP-2-C-methyl-D-erythritol 2-phosphate is bound by residues 57 to 59, 62 to 66, 133 to 136, phenylalanine 140, and arginine 143; these read DIG, FPDTD, and TTTE.

Belongs to the IspF family. In terms of assembly, homotrimer. It depends on a divalent metal cation as a cofactor.

The enzyme catalyses 4-CDP-2-C-methyl-D-erythritol 2-phosphate = 2-C-methyl-D-erythritol 2,4-cyclic diphosphate + CMP. It participates in isoprenoid biosynthesis; isopentenyl diphosphate biosynthesis via DXP pathway; isopentenyl diphosphate from 1-deoxy-D-xylulose 5-phosphate: step 4/6. Involved in the biosynthesis of isopentenyl diphosphate (IPP) and dimethylallyl diphosphate (DMAPP), two major building blocks of isoprenoid compounds. Catalyzes the conversion of 4-diphosphocytidyl-2-C-methyl-D-erythritol 2-phosphate (CDP-ME2P) to 2-C-methyl-D-erythritol 2,4-cyclodiphosphate (ME-CPP) with a corresponding release of cytidine 5-monophosphate (CMP). The protein is 2-C-methyl-D-erythritol 2,4-cyclodiphosphate synthase of Histophilus somni (strain 129Pt) (Haemophilus somnus).